A 134-amino-acid polypeptide reads, in one-letter code: Kinetochore-binding protein 3 (134 aa).

The protein resides in the nucleus. The protein localises to the chromosome. Its subcellular location is the centromere. It is found in the kinetochore. This Caenorhabditis elegans protein is Kinetochore-binding protein 3 (kbp-3).